Here is a 274-residue protein sequence, read N- to C-terminus: 4-hydroxy-tetrahydrodipicolinate reductase (274 aa).

NAD(+) is bound by residues 11-16 (GGSGRM) and E37. R38 provides a ligand contact to NADP(+). Residues 101–103 (GTT) and 125–128 (APNM) contribute to the NAD(+) site. H158 serves as the catalytic Proton donor/acceptor. H159 provides a ligand contact to (S)-2,3,4,5-tetrahydrodipicolinate. The active-site Proton donor is the K162. 168 to 169 (GT) lines the (S)-2,3,4,5-tetrahydrodipicolinate pocket.

It belongs to the DapB family.

The protein localises to the cytoplasm. It carries out the reaction (S)-2,3,4,5-tetrahydrodipicolinate + NAD(+) + H2O = (2S,4S)-4-hydroxy-2,3,4,5-tetrahydrodipicolinate + NADH + H(+). It catalyses the reaction (S)-2,3,4,5-tetrahydrodipicolinate + NADP(+) + H2O = (2S,4S)-4-hydroxy-2,3,4,5-tetrahydrodipicolinate + NADPH + H(+). It functions in the pathway amino-acid biosynthesis; L-lysine biosynthesis via DAP pathway; (S)-tetrahydrodipicolinate from L-aspartate: step 4/4. Catalyzes the conversion of 4-hydroxy-tetrahydrodipicolinate (HTPA) to tetrahydrodipicolinate. This is 4-hydroxy-tetrahydrodipicolinate reductase from Shewanella pealeana (strain ATCC 700345 / ANG-SQ1).